A 446-amino-acid polypeptide reads, in one-letter code: Phosphoglucosamine mutase (446 aa).

Ser102 serves as the catalytic Phosphoserine intermediate. Residues Ser102, Asp241, Asp243, and Asp245 each contribute to the Mg(2+) site. Phosphoserine is present on Ser102.

This sequence belongs to the phosphohexose mutase family. The cofactor is Mg(2+). Activated by phosphorylation.

The catalysed reaction is alpha-D-glucosamine 1-phosphate = D-glucosamine 6-phosphate. Functionally, catalyzes the conversion of glucosamine-6-phosphate to glucosamine-1-phosphate. This Xylella fastidiosa (strain M12) protein is Phosphoglucosamine mutase.